The sequence spans 451 residues: tRNA modification GTPase MnmE (451 aa).

(6S)-5-formyl-5,6,7,8-tetrahydrofolate is bound by residues arginine 25, glutamate 87, and arginine 127. The 153-residue stretch at 222–374 folds into the TrmE-type G domain; that stretch reads GLRVALVGRP…FVQVLLERCG (153 aa). K(+) is bound at residue asparagine 232. Residues 232–237, 251–257, and 276–279 contribute to the GTP site; these read NVGKSS, TELPGTT, and DTAG. Residue serine 236 participates in Mg(2+) binding. K(+) contacts are provided by threonine 251, leucine 253, and threonine 256. Mg(2+) is bound at residue threonine 257. A (6S)-5-formyl-5,6,7,8-tetrahydrofolate-binding site is contributed by lysine 451.

It belongs to the TRAFAC class TrmE-Era-EngA-EngB-Septin-like GTPase superfamily. TrmE GTPase family. Homodimer. Heterotetramer of two MnmE and two MnmG subunits. K(+) serves as cofactor.

It localises to the cytoplasm. Functionally, exhibits a very high intrinsic GTPase hydrolysis rate. Involved in the addition of a carboxymethylaminomethyl (cmnm) group at the wobble position (U34) of certain tRNAs, forming tRNA-cmnm(5)s(2)U34. The polypeptide is tRNA modification GTPase MnmE (Synechococcus sp. (strain CC9902)).